The following is a 159-amino-acid chain: Trafficking protein particle complex subunit 6A (159 aa).

Phosphoserine is present on serine 33.

Belongs to the TRAPP small subunits family. BET3 subfamily. Part of the multisubunit transport protein particle (TRAPP) complex. Heterodimer with TRAPPC3. The heterodimer TRAPPC3-TRAPPC6A interacts with TRAPPC2L. Interacts with TRAPPC2L. As to expression, ubiquitous, with lowest expression in skeletal muscle and brain and highest in kidney, liver and testis, as well as in cultured melanocytes.

The protein resides in the golgi apparatus. It is found in the cis-Golgi network. Its subcellular location is the endoplasmic reticulum. In terms of biological role, may play a role in vesicular transport during the biogenesis of melanosomes. The protein is Trafficking protein particle complex subunit 6A of Mus musculus (Mouse).